The following is a 942-amino-acid chain: Small RNA 2'-O-methyltransferase (942 aa).

Residues 19–87 form the DRBM domain; sequence FGAKASYTVE…AELALDKLGI (69 aa). Residues 93–204 form the HTH La-type RNA-binding domain; it reads DLTVDEARDE…KNAYPSEIVE (112 aa). Acidic residues predominate over residues 505–514; sequence EQSCDTDDDQ. Disordered stretches follow at residues 505–542 and 571–596; these read EQSCDTDDDQDTKSSSPNVFAAPPILQKEHSSESKNTN and PEYSSDGESPREDNESNEEMESEYSA. S-adenosyl-L-methionine-binding positions include serine 726, aspartate 745, 778–779, and leucine 795; that span reads SI. Positions 796, 799, and 800 each coordinate Mg(2+). A disordered region spans residues 837–856; sequence RSTPETQEENNSEPQLPKFR. Histidine 860 provides a ligand contact to Mg(2+).

This sequence belongs to the methyltransferase superfamily. HEN1 family. Binds small RNA duplexes as monomer. Mg(2+) serves as cofactor. In terms of tissue distribution, expressed in stems, leaves and inflorescences.

It localises to the nucleus. The enzyme catalyses small RNA 3'-end nucleotide + S-adenosyl-L-methionine = small RNA 3'-end 2'-O-methylnucleotide + S-adenosyl-L-homocysteine + H(+). Its function is as follows. Methyltransferase that adds a methyl group to the ribose of the last nucleotide of small RNAs (sRNAs). This protects the 3'-end of sRNAs from uridylation activity and subsequent degradation. Can methylate 3'-end of microRNAs (miRNAs), small interfering RNAs (siRNas) and trans-acting small interfering RNAs (ta-siRNAs). Involved in plant development through its role in small RNAs processing. Required for the specification of reproductive organ identities and the probable repression of A class genes. May control floral determinacy possibly by regulating the expression of the C class floral homeotic gene AGAMOUS (AG). This is Small RNA 2'-O-methyltransferase (HEN1) from Arabidopsis thaliana (Mouse-ear cress).